Reading from the N-terminus, the 150-residue chain is Classical arabinogalactan protein 6 (150 aa).

The signal sequence occupies residues 1 to 20 (MARQFVVLVLLTLTIATAFA). 2 stretches are compositionally biased toward low complexity: residues 19-75 (FAAD…SPAA) and 85-98 (SASS…APTV). The segment at 19–131 (FAADAPSASP…ESPKSGAVTT (113 aa)) is disordered. Ser-126 carries GPI-anchor amidated serine lipidation. The propeptide at 127 to 150 (GAVTTAKFSVVGTVATVGFFFFSF) is removed in mature form.

Belongs to the classical AGP family. In terms of processing, O-glycosylated on the hydroxyproline residues. Expressed in the anthers.

Its subcellular location is the cell membrane. Proteoglycan that seems to be implicated in diverse developmental roles such as differentiation, cell-cell recognition, embryogenesis and programmed cell death. Plays an important role during the formation of the nexine layer of the pollen wall. This is Classical arabinogalactan protein 6 (AGP6) from Arabidopsis thaliana (Mouse-ear cress).